The chain runs to 179 residues: Bifunctional protein PyrR (179 aa).

Residues 97 to 109 carry the PRPP-binding motif; the sequence is VILIDDVLFTGRT.

Belongs to the purine/pyrimidine phosphoribosyltransferase family. PyrR subfamily.

It carries out the reaction UMP + diphosphate = 5-phospho-alpha-D-ribose 1-diphosphate + uracil. Functionally, regulates the transcription of the pyrimidine nucleotide (pyr) operon in response to exogenous pyrimidines. Its function is as follows. Also displays a weak uracil phosphoribosyltransferase activity which is not physiologically significant. The polypeptide is Bifunctional protein PyrR (Actinobacillus pleuropneumoniae serotype 5b (strain L20)).